We begin with the raw amino-acid sequence, 454 residues long: Bifunctional protein GlmU (454 aa).

The tract at residues 1 to 226 (MSLNVVILAA…AIEVEGANNR (226 aa)) is pyrophosphorylase. UDP-N-acetyl-alpha-D-glucosamine contacts are provided by residues 8–11 (LAAG), Lys-22, Gln-73, 78–79 (GT), 100–102 (YGD), Gly-137, Glu-151, Asn-166, and Asn-224. Mg(2+) is bound at residue Asp-102. Asn-224 serves as a coordination point for Mg(2+). The tract at residues 227-247 (VQLAQLERAYQARAAEKMMLE) is linker. Residues 248–454 (GANLRDPARI…GWQRPIKIKK (207 aa)) are N-acetyltransferase. UDP-N-acetyl-alpha-D-glucosamine contacts are provided by Arg-330 and Lys-348. His-360 functions as the Proton acceptor in the catalytic mechanism. UDP-N-acetyl-alpha-D-glucosamine-binding residues include Tyr-363 and Asn-374. Acetyl-CoA is bound by residues Ala-377, 383 to 384 (NY), Ser-402, Ala-420, and Arg-437.

This sequence in the N-terminal section; belongs to the N-acetylglucosamine-1-phosphate uridyltransferase family. In the C-terminal section; belongs to the transferase hexapeptide repeat family. As to quaternary structure, homotrimer. The cofactor is Mg(2+).

The protein resides in the cytoplasm. It catalyses the reaction alpha-D-glucosamine 1-phosphate + acetyl-CoA = N-acetyl-alpha-D-glucosamine 1-phosphate + CoA + H(+). It carries out the reaction N-acetyl-alpha-D-glucosamine 1-phosphate + UTP + H(+) = UDP-N-acetyl-alpha-D-glucosamine + diphosphate. Its pathway is nucleotide-sugar biosynthesis; UDP-N-acetyl-alpha-D-glucosamine biosynthesis; N-acetyl-alpha-D-glucosamine 1-phosphate from alpha-D-glucosamine 6-phosphate (route II): step 2/2. It participates in nucleotide-sugar biosynthesis; UDP-N-acetyl-alpha-D-glucosamine biosynthesis; UDP-N-acetyl-alpha-D-glucosamine from N-acetyl-alpha-D-glucosamine 1-phosphate: step 1/1. The protein operates within bacterial outer membrane biogenesis; LPS lipid A biosynthesis. Functionally, catalyzes the last two sequential reactions in the de novo biosynthetic pathway for UDP-N-acetylglucosamine (UDP-GlcNAc). The C-terminal domain catalyzes the transfer of acetyl group from acetyl coenzyme A to glucosamine-1-phosphate (GlcN-1-P) to produce N-acetylglucosamine-1-phosphate (GlcNAc-1-P), which is converted into UDP-GlcNAc by the transfer of uridine 5-monophosphate (from uridine 5-triphosphate), a reaction catalyzed by the N-terminal domain. This is Bifunctional protein GlmU from Shewanella frigidimarina (strain NCIMB 400).